Here is a 1003-residue protein sequence, read N- to C-terminus: Translation initiation factor IF-2 (1003 aa).

Composition is skewed to basic and acidic residues over residues 61-74, 139-169, 180-206, 219-229, and 252-290; these read EKFS…DRNK, PVVE…KKPE, LEEK…KETP, VFKIRPTEFKS, and SKEE…DKIS. 2 disordered regions span residues 61-81 and 135-362; these read EKFS…SIEG and PKAE…KDRF. The segment covering 315 to 350 has biased composition (low complexity); the sequence is NAAGTTNAGGASNNNQRNDNANRPNRNNNSKPNGNN. Residues 502–672 form the tr-type G domain; the sequence is PRAPIVTVMG…LLEAEMLDLK (171 aa). The segment at 511-518 is G1; that stretch reads GHVDHGKT. 511–518 contacts GTP; the sequence is GHVDHGKT. Positions 536–540 are G2; the sequence is GITQH. The interval 558–561 is G3; that stretch reads DTPG. Residues 558–562 and 612–615 contribute to the GTP site; these read DTPGH and NKVD. Residues 612 to 615 are G4; sequence NKVD. The segment at 648-650 is G5; it reads SAK.

It belongs to the TRAFAC class translation factor GTPase superfamily. Classic translation factor GTPase family. IF-2 subfamily.

It is found in the cytoplasm. Its function is as follows. One of the essential components for the initiation of protein synthesis. Protects formylmethionyl-tRNA from spontaneous hydrolysis and promotes its binding to the 30S ribosomal subunits. Also involved in the hydrolysis of GTP during the formation of the 70S ribosomal complex. The chain is Translation initiation factor IF-2 from Phocaeicola vulgatus (strain ATCC 8482 / DSM 1447 / JCM 5826 / CCUG 4940 / NBRC 14291 / NCTC 11154) (Bacteroides vulgatus).